The chain runs to 1365 residues: Histone-lysine N-methyltransferase NSD2 (1365 aa).

Threonine 110 and threonine 114 each carry phosphothreonine. Serine 121 is subject to Phosphoserine. The segment at 149 to 169 (ADVSQSEENEQKSDNKTRRNR) is disordered. Serine 172 is modified (phosphoserine). Residues 222 to 286 (VGDLVWSKVS…FEKSLVAFEG (65 aa)) form the PWWP 1 domain. Disordered regions lie at residues 373-455 (MVDS…RKGD), 513-567 (QSEE…DKTA), and 594-658 (CKPL…SKKS). A Phosphoserine modification is found at serine 376. Phosphothreonine is present on threonine 422. A DNA-binding region (HMG box) is located at residues 453–521 (KGDSAAQFLV…AQSEEDSGNG (69 aa)). Residues 552–567 (DKHSLRKRETITDKTA) show a composition bias toward basic and acidic residues. Residues 603-623 (ASATASSALGFNKSSSPSASL) are compositionally biased toward polar residues. Acidic residues predominate over residues 632 to 648 (PGDEPSESPYESADETQ). 3 consecutive PHD-type zinc fingers follow at residues 667–713 (EYVC…CASG), 714–770 (IHSC…CHAS), and 831–875 (VSWC…CRAG). The region spanning 880–942 (FQDIIWVKLG…QARVFPYMEG (63 aa)) is the PWWP 2 domain. In terms of domain architecture, AWS spans 1011 to 1061 (SEIPKCNCKPTDENPCGSDSECLNRMLMFECHPQVCPAGEYCQNQCFTKRQ). The Zn(2+) site is built by cysteine 1016, cysteine 1018, cysteine 1026, cysteine 1032, cysteine 1041, cysteine 1046, and cysteine 1052. The SET domain occupies 1063–1180 (PETKIIKTDG…AGTELTFNYN (118 aa)). S-adenosyl-L-methionine contacts are provided by residues tryptophan 1075, 1115–1118 (THFY), and 1141–1142 (NH). Cysteine 1144 is a Zn(2+) binding site. Asparagine 1186 contacts S-adenosyl-L-methionine. One can recognise a Post-SET domain in the interval 1187–1203 (EKTVCRCGASNCSGFLG). Cysteine 1191 provides a ligand contact to Zn(2+). Position 1192 (arginine 1192) interacts with S-adenosyl-L-methionine. 2 residues coordinate Zn(2+): cysteine 1193 and cysteine 1198. A disordered region spans residues 1206 to 1232 (PKTSASLSSEEKGKKAKKKTRRRRAKG). Residues 1219-1230 (KKAKKKTRRRRA) are compositionally biased toward basic residues. The PHD-type 4; atypical zinc-finger motif lies at 1239–1286 (EDECFRCGDGGQLVLCDRKFCTKAYHLSCLGLGKRPFGKWECPWHHCD). The segment at 1329–1365 (RADSSSSTKTEKPFPESLKSKGKRKKRRCWRRVTDGK) is disordered. A compositionally biased stretch (basic residues) spans 1348 to 1359 (SKGKRKKRRCWR).

Belongs to the class V-like SAM-binding methyltransferase superfamily. Histone-lysine methyltransferase family. SET2 subfamily. In terms of assembly, interacts with HDAC1. Interacts (via PHD-type zinc fingers 1, 2 and 3) with SALL1. Interacts (via PHD-type 1, 2 and 3) with SALL4. Interacts with NANOG. Interacts with OGT. Interacts (via HMG box) with NKX2-5. In terms of tissue distribution, during B-cell development, expressed in early B2 cell progenitors (pre- and pro-B cells) with a decrease in expression at later stages.

The protein localises to the nucleus. Its subcellular location is the chromosome. It catalyses the reaction L-lysyl(36)-[histone H3] + S-adenosyl-L-methionine = N(6)-methyl-L-lysyl(36)-[histone H3] + S-adenosyl-L-homocysteine + H(+). It carries out the reaction L-lysyl(36)-[histone H3] + 2 S-adenosyl-L-methionine = N(6),N(6)-dimethyl-L-lysyl(36)-[histone H3] + 2 S-adenosyl-L-homocysteine + 2 H(+). In terms of biological role, histone methyltransferase which specifically dimethylates nucleosomal histone H3 at 'Lys-36' (H3K36me2). Also monomethylates nucleosomal histone H3 at 'Lys-36' (H3K36me) in vitro. Does not trimethylate nucleosomal histone H3 at 'Lys-36' (H3K36me3). However, specifically trimethylates histone H3 at 'Lys-36' (H3K36me3) at euchromatic regions in embryonic stem (ES) cells. By methylating histone H3 at 'Lys-36', involved in the regulation of gene transcription during various biological processes. In ES cells, associates with developmental transcription factors such as SALL1 and represses inappropriate gene transcription mediated by histone deacetylation. During heart development, associates with transcription factor NKX2-5 to repress transcription of NKX2-5 target genes. Plays an essential role in adipogenesis, by regulating expression of genes involved in pre-adipocyte differentiation. During T-cell receptor (TCR) and CD28-mediated T-cell activation, promotes the transcription of transcription factor BCL6 which is required for follicular helper T (Tfh) cell differentiation. During B-cell development, required for the generation of the B1 lineage. During B2 cell activation, may contribute to the control of isotype class switch recombination (CRS), splenic germinal center formation, and the humoral immune response. Plays a role in class switch recombination of the immunoglobulin heavy chain (IgH) locus during B-cell activation. By regulating the methylation of histone H3 at 'Lys-36' and histone H4 at 'Lys-20' at the IgH locus, involved in TP53BP1 recruitment to the IgH switch region and promotes the transcription of IgA. Histone methyltransferase which specifically dimethylates nucleosomal histone H3 at 'Lys-36' (H3K36me2). Mono-, di- and tri-methylates histone H3 at 'Lys-27' (H3K27me, H3K27me2, H3K27me3). Methylation of histone H3 at 'Lys-27' is controversial. May act as a transcription regulator that binds DNA and suppresses IL5 transcription through HDAC recruitment. In Mus musculus (Mouse), this protein is Histone-lysine N-methyltransferase NSD2 (Nsd2).